A 262-amino-acid chain; its full sequence is Putative hydro-lyase Cbei_2760 (262 aa).

It belongs to the D-glutamate cyclase family.

In Clostridium beijerinckii (strain ATCC 51743 / NCIMB 8052) (Clostridium acetobutylicum), this protein is Putative hydro-lyase Cbei_2760.